Consider the following 234-residue polypeptide: Putative ankyrin repeat protein RF_0063 (234 aa).

2 ANK repeats span residues 149 to 180 and 184 to 213; these read NNNT…TISI and YNNT…QKAL.

In Rickettsia felis (strain ATCC VR-1525 / URRWXCal2) (Rickettsia azadi), this protein is Putative ankyrin repeat protein RF_0063.